We begin with the raw amino-acid sequence, 102 residues long: Small ribosomal subunit protein uS10 (102 aa).

Belongs to the universal ribosomal protein uS10 family. As to quaternary structure, part of the 30S ribosomal subunit.

Involved in the binding of tRNA to the ribosomes. The chain is Small ribosomal subunit protein uS10 from Bacillus anthracis (strain A0248).